The chain runs to 240 residues: Ribonuclease 3 (240 aa).

Residues Val9–Gly141 enclose the RNase III domain. Glu54 lines the Mg(2+) pocket. Asp58 is a catalytic residue. Mg(2+)-binding residues include Asp127 and Glu130. The active site involves Glu130. Residues Asp168–Lys237 enclose the DRBM domain.

It belongs to the ribonuclease III family. In terms of assembly, homodimer. The cofactor is Mg(2+).

It is found in the cytoplasm. The enzyme catalyses Endonucleolytic cleavage to 5'-phosphomonoester.. Functionally, digests double-stranded RNA. Involved in the processing of primary rRNA transcript to yield the immediate precursors to the large and small rRNAs (23S and 16S). Also processes some mRNAs, and tRNAs when they are encoded in the rRNA operon. Probably processes pre-crRNA and tracrRNA of type II CRISPR loci if present in the organism. This Thermotoga maritima (strain ATCC 43589 / DSM 3109 / JCM 10099 / NBRC 100826 / MSB8) protein is Ribonuclease 3 (rnc).